Reading from the N-terminus, the 104-residue chain is Large ribosomal subunit protein uL24 (104 aa).

The protein belongs to the universal ribosomal protein uL24 family. In terms of assembly, part of the 50S ribosomal subunit.

Functionally, one of two assembly initiator proteins, it binds directly to the 5'-end of the 23S rRNA, where it nucleates assembly of the 50S subunit. In terms of biological role, one of the proteins that surrounds the polypeptide exit tunnel on the outside of the subunit. The polypeptide is Large ribosomal subunit protein uL24 (Enterobacter sp. (strain 638)).